Reading from the N-terminus, the 148-residue chain is Ribonuclease pancreatic (148 aa).

A signal peptide spans 1 to 25 (MGLEKSLMLFPLLVLVLGLVQPSLG). Substrate is bound by residues Lys-32 and Arg-35. His-37 acts as the Proton acceptor in catalysis. 4 disulfides stabilise this stretch: Cys-50/Cys-108, Cys-64/Cys-119, Cys-82/Cys-134, and Cys-89/Cys-96. Residues 65-69 (KPVNT), Lys-90, and Arg-109 contribute to the substrate site. His-143 (proton donor) is an active-site residue.

Belongs to the pancreatic ribonuclease family. In terms of assembly, monomer. Interacts with and forms tight 1:1 complexes with RNH1. Dimerization of two such complexes may occur. Interaction with RNH1 inhibits this protein. In terms of tissue distribution, pancreas.

It is found in the secreted. It catalyses the reaction an [RNA] containing cytidine + H2O = an [RNA]-3'-cytidine-3'-phosphate + a 5'-hydroxy-ribonucleotide-3'-[RNA].. The enzyme catalyses an [RNA] containing uridine + H2O = an [RNA]-3'-uridine-3'-phosphate + a 5'-hydroxy-ribonucleotide-3'-[RNA].. Functionally, endonuclease that catalyzes the cleavage of RNA on the 3' side of pyrimidine nucleotides. Acts on single-stranded and double-stranded RNA. The sequence is that of Ribonuclease pancreatic (RNASE1) from Gerbilliscus gambianus (Gambian gerbil).